Reading from the N-terminus, the 358-residue chain is Pyruvate dehydrogenase E1 component subunit alpha (358 aa).

Heterodimer of an alpha and a beta chain. Requires thiamine diphosphate as cofactor.

The enzyme catalyses N(6)-[(R)-lipoyl]-L-lysyl-[protein] + pyruvate + H(+) = N(6)-[(R)-S(8)-acetyldihydrolipoyl]-L-lysyl-[protein] + CO2. The pyruvate dehydrogenase complex catalyzes the overall conversion of pyruvate to acetyl-CoA and CO(2). It contains multiple copies of three enzymatic components: pyruvate dehydrogenase (E1), dihydrolipoamide acetyltransferase (E2) and lipoamide dehydrogenase (E3). This chain is Pyruvate dehydrogenase E1 component subunit alpha (pdhA), found in Mycoplasma genitalium (strain ATCC 33530 / DSM 19775 / NCTC 10195 / G37) (Mycoplasmoides genitalium).